Consider the following 437-residue polypeptide: Enolase-related protein 1 (437 aa).

Substrate contacts are provided by His160 and Glu169. The Proton donor role is filled by Glu212. Mg(2+) contacts are provided by Asp247, Glu296, and Asp321. Residues Glu296 and Asp321 each contribute to the substrate site. Lys346 acts as the Proton acceptor in catalysis. Substrate-binding positions include 373–376 and Lys397; that span reads SHRS.

This sequence belongs to the enolase family. Mg(2+) is required as a cofactor.

It catalyses the reaction (2R)-2-phosphoglycerate = phosphoenolpyruvate + H2O. It functions in the pathway carbohydrate degradation; glycolysis; pyruvate from D-glyceraldehyde 3-phosphate: step 4/5. The chain is Enolase-related protein 1 (ERR1) from Saccharomyces cerevisiae (strain ATCC 204508 / S288c) (Baker's yeast).